Here is a 253-residue protein sequence, read N- to C-terminus: Triosephosphate isomerase (253 aa).

15-17 (NWK) contacts substrate. Catalysis depends on His101, which acts as the Electrophile. Glu171 functions as the Proton acceptor in the catalytic mechanism. Residues Gly177, Ser216, and 237–238 (GG) contribute to the substrate site.

It belongs to the triosephosphate isomerase family. As to quaternary structure, homodimer.

It localises to the cytoplasm. The catalysed reaction is D-glyceraldehyde 3-phosphate = dihydroxyacetone phosphate. It participates in carbohydrate biosynthesis; gluconeogenesis. The protein operates within carbohydrate degradation; glycolysis; D-glyceraldehyde 3-phosphate from glycerone phosphate: step 1/1. Functionally, involved in the gluconeogenesis. Catalyzes stereospecifically the conversion of dihydroxyacetone phosphate (DHAP) to D-glyceraldehyde-3-phosphate (G3P). The chain is Triosephosphate isomerase from Caulobacter vibrioides (strain ATCC 19089 / CIP 103742 / CB 15) (Caulobacter crescentus).